A 123-amino-acid polypeptide reads, in one-letter code: Small ribosomal subunit protein uS12cz/uS12cy (123 aa).

This sequence belongs to the universal ribosomal protein uS12 family. In terms of assembly, part of the 30S ribosomal subunit.

It localises to the plastid. It is found in the chloroplast. Its function is as follows. With S4 and S5 plays an important role in translational accuracy. Located at the interface of the 30S and 50S subunits. The chain is Small ribosomal subunit protein uS12cz/uS12cy (rps12-A) from Coffea arabica (Arabian coffee).